The chain runs to 512 residues: NAD(P)H-quinone oxidoreductase chain 4, chloroplastic (512 aa).

The next 14 helical transmembrane spans lie at 4-24, 34-54, 87-107, 111-131, 134-154, 167-187, 210-230, 241-261, 273-293, 312-332, 333-353, 373-395, 416-436, and 462-482; these read LPWLTIIVLFPILAGLLIPFI, WYALGVGILDFLLITYIFGYH, MPLVLLTGFVTTLAILGAWPV, AKLFYFLMLAMYSGQIGVFVS, LLLFFFMWELELIPVYLLLLV, FILYTAIGSIFILLAGLTMAF, ILLYIGFLIAYAVKLPAFPLH, HYSTCMLLAGILLKMGGYALI, LIFAPFLIIIGVINIIYAALT, MGFVLIGIGSLTNLGLSGAVL, QMISHGLIGASLFFLAGTTYD, TFAMFTTCSLASLALPGMSGFVA, IITFLEGIGIILTPIYLLSML, and IFVITCLVLPILGIGIYPKMA.

Belongs to the complex I subunit 4 family.

The protein localises to the plastid. The protein resides in the chloroplast thylakoid membrane. It catalyses the reaction a plastoquinone + NADH + (n+1) H(+)(in) = a plastoquinol + NAD(+) + n H(+)(out). It carries out the reaction a plastoquinone + NADPH + (n+1) H(+)(in) = a plastoquinol + NADP(+) + n H(+)(out). The protein is NAD(P)H-quinone oxidoreductase chain 4, chloroplastic of Chlorokybus atmophyticus (Soil alga).